The primary structure comprises 60 residues: Cytochrome c oxidase assembly protein COX14 homolog (60 aa).

Residues 10–32 form a helical membrane-spanning segment; sequence VGYRLFSGSMMLLTVYGGYLCVV.

The protein localises to the mitochondrion membrane. Plays a role in the assembly or stability of the cytochrome c oxidase complex (COX). This Danio rerio (Zebrafish) protein is Cytochrome c oxidase assembly protein COX14 homolog.